The following is a 229-amino-acid chain: Molybdenum transport system permease protein ModB (229 aa).

Residues 1-16 (MILTDPEWQAVLLSLK) lie on the Periplasmic side of the membrane. In terms of domain architecture, ABC transmembrane type-1 spans 11-219 (VLLSLKVSSL…MISLLISEWL (209 aa)). Residues 17–37 (VSSLAVLFSLPFGIFFAWLLV) form a helical membrane-spanning segment. Residues 38–49 (RCTFPGKALLDS) are Cytoplasmic-facing. The chain crosses the membrane as a helical span at residues 50 to 70 (VLHLPLVLPPVVVGYLLLVSM). Topologically, residues 71–83 (GRRGFIGERLYDW) are periplasmic. A helical transmembrane segment spans residues 84–104 (FGITFAFSWRGAVLAAAVMSF). Over 105-136 (PLMVRAIRLALEGVDVKLEQAARTLGAGRWRV) the chain is Cytoplasmic. Residues 137 to 157 (FFTITLPLTLPGIIVGTVLAF) form a helical membrane-spanning segment. Residues 158-201 (ARSLGEFGATITFVSNIPGETRTIPSAMYTLIQTPGGESGAARL) are Periplasmic-facing. A helical transmembrane segment spans residues 202–222 (CIISIALAMISLLISEWLARI). The Cytoplasmic portion of the chain corresponds to 223–229 (SRERAGR).

Belongs to the binding-protein-dependent transport system permease family. CysTW subfamily.

It localises to the cell inner membrane. Functionally, part of the binding-protein-dependent transport system for molybdenum; probably responsible for the translocation of the substrate across the membrane. The sequence is that of Molybdenum transport system permease protein ModB (modB) from Escherichia coli O157:H7.